Here is a 257-residue protein sequence, read N- to C-terminus: 3-deoxy-manno-octulosonate cytidylyltransferase (257 aa).

This sequence belongs to the KdsB family.

The protein localises to the cytoplasm. The enzyme catalyses 3-deoxy-alpha-D-manno-oct-2-ulosonate + CTP = CMP-3-deoxy-beta-D-manno-octulosonate + diphosphate. It participates in nucleotide-sugar biosynthesis; CMP-3-deoxy-D-manno-octulosonate biosynthesis; CMP-3-deoxy-D-manno-octulosonate from 3-deoxy-D-manno-octulosonate and CTP: step 1/1. The protein operates within bacterial outer membrane biogenesis; lipopolysaccharide biosynthesis. In terms of biological role, activates KDO (a required 8-carbon sugar) for incorporation into bacterial lipopolysaccharide in Gram-negative bacteria. This chain is 3-deoxy-manno-octulosonate cytidylyltransferase, found in Stenotrophomonas maltophilia (strain K279a).